Reading from the N-terminus, the 371-residue chain is Chorismate synthase (371 aa).

2 residues coordinate NADP(+): R48 and R54. Residues 125-127, 238-239, G278, 293-297, and R319 contribute to the FMN site; these read RSS, NA, and KPTSS.

It belongs to the chorismate synthase family. As to quaternary structure, homotetramer. The cofactor is FMNH2.

It carries out the reaction 5-O-(1-carboxyvinyl)-3-phosphoshikimate = chorismate + phosphate. The protein operates within metabolic intermediate biosynthesis; chorismate biosynthesis; chorismate from D-erythrose 4-phosphate and phosphoenolpyruvate: step 7/7. Functionally, catalyzes the anti-1,4-elimination of the C-3 phosphate and the C-6 proR hydrogen from 5-enolpyruvylshikimate-3-phosphate (EPSP) to yield chorismate, which is the branch point compound that serves as the starting substrate for the three terminal pathways of aromatic amino acid biosynthesis. This reaction introduces a second double bond into the aromatic ring system. This chain is Chorismate synthase, found in Polynucleobacter asymbioticus (strain DSM 18221 / CIP 109841 / QLW-P1DMWA-1) (Polynucleobacter necessarius subsp. asymbioticus).